Here is a 172-residue protein sequence, read N- to C-terminus: Adenine phosphoribosyltransferase (172 aa).

The protein belongs to the purine/pyrimidine phosphoribosyltransferase family. Homodimer.

It localises to the cytoplasm. It carries out the reaction AMP + diphosphate = 5-phospho-alpha-D-ribose 1-diphosphate + adenine. It functions in the pathway purine metabolism; AMP biosynthesis via salvage pathway; AMP from adenine: step 1/1. Catalyzes a salvage reaction resulting in the formation of AMP, that is energically less costly than de novo synthesis. The protein is Adenine phosphoribosyltransferase of Anaeromyxobacter dehalogenans (strain 2CP-C).